A 921-amino-acid chain; its full sequence is Isoleucine--tRNA ligase (921 aa).

The 'HIGH' region motif lies at 57-67 (PYANGNIHVGT). E551 contributes to the L-isoleucyl-5'-AMP binding site. The short motif at 592 to 596 (KMSKS) is the 'KMSKS' region element. Residue K595 participates in ATP binding. Zn(2+)-binding residues include C885, C888, C905, and C908.

Belongs to the class-I aminoacyl-tRNA synthetase family. IleS type 1 subfamily. As to quaternary structure, monomer. Zn(2+) serves as cofactor.

It localises to the cytoplasm. The catalysed reaction is tRNA(Ile) + L-isoleucine + ATP = L-isoleucyl-tRNA(Ile) + AMP + diphosphate. Its function is as follows. Catalyzes the attachment of isoleucine to tRNA(Ile). As IleRS can inadvertently accommodate and process structurally similar amino acids such as valine, to avoid such errors it has two additional distinct tRNA(Ile)-dependent editing activities. One activity is designated as 'pretransfer' editing and involves the hydrolysis of activated Val-AMP. The other activity is designated 'posttransfer' editing and involves deacylation of mischarged Val-tRNA(Ile). This is Isoleucine--tRNA ligase from Kosmotoga olearia (strain ATCC BAA-1733 / DSM 21960 / TBF 19.5.1).